A 265-amino-acid chain; its full sequence is Imidazole glycerol phosphate synthase subunit HisF (265 aa).

Catalysis depends on residues D17 and D136.

It belongs to the HisA/HisF family. Heterodimer of HisH and HisF.

Its subcellular location is the cytoplasm. It carries out the reaction 5-[(5-phospho-1-deoxy-D-ribulos-1-ylimino)methylamino]-1-(5-phospho-beta-D-ribosyl)imidazole-4-carboxamide + L-glutamine = D-erythro-1-(imidazol-4-yl)glycerol 3-phosphate + 5-amino-1-(5-phospho-beta-D-ribosyl)imidazole-4-carboxamide + L-glutamate + H(+). Its pathway is amino-acid biosynthesis; L-histidine biosynthesis; L-histidine from 5-phospho-alpha-D-ribose 1-diphosphate: step 5/9. IGPS catalyzes the conversion of PRFAR and glutamine to IGP, AICAR and glutamate. The HisF subunit catalyzes the cyclization activity that produces IGP and AICAR from PRFAR using the ammonia provided by the HisH subunit. The polypeptide is Imidazole glycerol phosphate synthase subunit HisF (Mycolicibacterium paratuberculosis (strain ATCC BAA-968 / K-10) (Mycobacterium paratuberculosis)).